We begin with the raw amino-acid sequence, 128 residues long: MGDYVVVLEAPIIVKDVETSEDAINVAVSKVAKALNKENLDFVRVEIGYSQCPVCGAHFESAFVIGSVGLVGIYLTLKVFNAQSIEHAERIAKAVVGKALKRVPLKVFEIRELEEENGDGLEVPDEFE.

Belongs to the UPF0212 family.

In Thermococcus gammatolerans (strain DSM 15229 / JCM 11827 / EJ3), this protein is UPF0212 protein TGAM_1344.